Consider the following 259-residue polypeptide: Protein-tyrosine phosphatase RolB (259 aa).

The tract at residues 219 to 259 (GISRPAASSPEPDLTLRLSGPDQEGEEGVMKPAAVNLKKEA) is disordered.

It carries out the reaction O-phospho-L-tyrosyl-[protein] + H2O = L-tyrosyl-[protein] + phosphate. In terms of biological role, induces differentiation and growth of neoplastic roots (hairy roots). Seems to function as a tyrosine phosphatase. The protein is Protein-tyrosine phosphatase RolB (rolB) of Rhizobium rhizogenes (Agrobacterium rhizogenes).